We begin with the raw amino-acid sequence, 103 residues long: Small ribosomal subunit protein uS10 (103 aa).

This sequence belongs to the universal ribosomal protein uS10 family. In terms of assembly, part of the 30S ribosomal subunit.

In terms of biological role, involved in the binding of tRNA to the ribosomes. The chain is Small ribosomal subunit protein uS10 from Campylobacter hominis (strain ATCC BAA-381 / DSM 21671 / CCUG 45161 / LMG 19568 / NCTC 13146 / CH001A).